We begin with the raw amino-acid sequence, 125 residues long: Small ribosomal subunit protein uS13 (125 aa).

The tract at residues 90–125 is disordered; the sequence is QRHRKGLPVRGQRTKTNARTRKGPKRTVAGKKKATK.

The protein belongs to the universal ribosomal protein uS13 family. Part of the 30S ribosomal subunit. Forms a loose heterodimer with protein S19. Forms two bridges to the 50S subunit in the 70S ribosome.

In terms of biological role, located at the top of the head of the 30S subunit, it contacts several helices of the 16S rRNA. In the 70S ribosome it contacts the 23S rRNA (bridge B1a) and protein L5 of the 50S subunit (bridge B1b), connecting the 2 subunits; these bridges are implicated in subunit movement. Contacts the tRNAs in the A and P-sites. This is Small ribosomal subunit protein uS13 from Bifidobacterium longum (strain DJO10A).